The sequence spans 415 residues: Serine--tRNA ligase (415 aa).

Residue Thr-231–Glu-233 coordinates L-serine. ATP is bound at residue Arg-262–Glu-264. Glu-285 serves as a coordination point for L-serine. Glu-349–Ser-352 provides a ligand contact to ATP. Residue Ser-383 participates in L-serine binding.

This sequence belongs to the class-II aminoacyl-tRNA synthetase family. Type-1 seryl-tRNA synthetase subfamily. Homodimer. The tRNA molecule binds across the dimer.

The protein resides in the cytoplasm. It catalyses the reaction tRNA(Ser) + L-serine + ATP = L-seryl-tRNA(Ser) + AMP + diphosphate + H(+). The catalysed reaction is tRNA(Sec) + L-serine + ATP = L-seryl-tRNA(Sec) + AMP + diphosphate + H(+). Its pathway is aminoacyl-tRNA biosynthesis; selenocysteinyl-tRNA(Sec) biosynthesis; L-seryl-tRNA(Sec) from L-serine and tRNA(Sec): step 1/1. In terms of biological role, catalyzes the attachment of serine to tRNA(Ser). Is also able to aminoacylate tRNA(Sec) with serine, to form the misacylated tRNA L-seryl-tRNA(Sec), which will be further converted into selenocysteinyl-tRNA(Sec). In Helicobacter pylori (strain P12), this protein is Serine--tRNA ligase.